Reading from the N-terminus, the 192-residue chain is Adenylate kinase (192 aa).

10–15 is a binding site for ATP; the sequence is GSGKGT. The tract at residues 30–59 is NMP; that stretch reads STGDMLREVISRETEVGRKAKAIINAGALV. Residues Thr-31, Arg-36, 57 to 59, 85 to 88, and Gln-92 each bind AMP; these read ALV and GYPR. The LID stretch occupies residues 126–142; sequence KRVQETIAVGGQVRSDD. Arg-127 lines the ATP pocket. 2 residues coordinate AMP: Arg-139 and Arg-150. Met-178 contributes to the ATP binding site.

This sequence belongs to the adenylate kinase family. In terms of assembly, monomer.

The protein localises to the cytoplasm. The catalysed reaction is AMP + ATP = 2 ADP. It functions in the pathway purine metabolism; AMP biosynthesis via salvage pathway; AMP from ADP: step 1/1. Functionally, catalyzes the reversible transfer of the terminal phosphate group between ATP and AMP. Plays an important role in cellular energy homeostasis and in adenine nucleotide metabolism. In Bartonella quintana (strain Toulouse) (Rochalimaea quintana), this protein is Adenylate kinase.